We begin with the raw amino-acid sequence, 426 residues long: Protein BTN1 (426 aa).

Residues 1-32 (MFIISETQRTFASFFIFGLLNNILYVIILSAA) form the signal peptide. The next 10 helical transmembrane spans lie at 44–64 (IVLL…PFFI), 67–87 (VPYI…MVLI), 99–119 (ILGI…FLQL), 129–149 (IGGF…LFMV), 154–174 (MGFP…GFII), 243–263 (ITPL…SEYV), 290–310 (IYVV…SSVT), 318–338 (LYLL…QSIY), 340–360 (LPFH…LLGG), and 384–404 (GCVS…NWWL).

It belongs to the battenin family.

The protein localises to the vacuole membrane. Involved in vacuolar transport and vacuole pH homeostasis. Also required for cytokinesis. This chain is Protein BTN1 (BTN1), found in Candida albicans (strain SC5314 / ATCC MYA-2876) (Yeast).